The chain runs to 639 residues: Splicing factor 1 (639 aa).

2 disordered regions span residues methionine 1–proline 42 and leucine 65–leucine 94. Alanine 2 is modified (N-acetylalanine). Serine 14 is subject to Phosphoserine. Positions lysine 15–arginine 19 match the Nuclear localization signal motif. Phosphoserine; by PKG is present on serine 20. Phosphoserine occurs at positions 80 and 82. A Phosphotyrosine modification is found at tyrosine 87. Residue serine 89 is modified to Phosphoserine. A KH domain is found at methionine 141–isoleucine 222. The CCHC-type zinc-finger motif lies at threonine 277 to arginine 296. A disordered region spans residues valine 325–asparagine 639. Over residues proline 335–alanine 350 the composition is skewed to low complexity. Residues methionine 382–proline 394 show a composition bias toward gly residues. Residues asparagine 418–methionine 447 show a composition bias toward pro residues. Leucine 463 is subject to Phosphoserine. Lysine 467 carries the omega-N-methylarginine modification. Residues methionine 470 to proline 499 are compositionally biased toward pro residues. 2 stretches are compositionally biased toward low complexity: residues serine 515–threonine 534 and proline 542–methionine 566. Pro residues-rich tracts occupy residues valine 567–glycine 591 and alanine 598–aspartate 608. Residues methionine 615–proline 625 are compositionally biased toward low complexity. Over residues phenylalanine 626–asparagine 639 the composition is skewed to pro residues.

The protein belongs to the BBP/SF1 family. Binds U2AF2. Interacts with U1 snRNA. Binds EWSR1, FUS and TAF15. Interacts with RBM17. Post-translationally, phosphorylation on Ser-20 interferes with U2AF2 binding and spliceosome assembly. Isoform 6 is phosphorylated on Ser-463. As to expression, detected in lung, ovary, adrenal gland, colon, kidney, muscle, pancreas, thyroid, placenta, brain, liver and heart.

It is found in the nucleus. Its function is as follows. Necessary for the ATP-dependent first step of spliceosome assembly. Binds to the intron branch point sequence (BPS) 5'-UACUAAC-3' of the pre-mRNA. May act as transcription repressor. This chain is Splicing factor 1 (SF1), found in Homo sapiens (Human).